A 358-amino-acid polypeptide reads, in one-letter code: MTENFPLPPLLGVDWDHLGFEPLEVNGHVECTFSTTTSCWTEPVFVTNPYLPVHGLAPGLNYGQQIFEGMKAFRNPSGDVQLFRPDQNALRFARSALRVAIPPVPTDLFLRAVNTAVGMNTDFVPPHGTGASLYIRPMAFASSPTVGLFLASQFKFCVYVLPVSPLHGKATQEGASVLVIEDFDRAAPLGTGNVKVGGNYGPVLGLIDEAKKQGFNLTLHLDSLSHSLIDEFSTSGFIGVLNDGEVPTIVVSDSQQVVSSITVDSICELARAFDWHVQKRPISFLEVARFSEVYAAGTAAVLVPVESILRRSTGEHVVYSVEYSSPTSCFSRLSTALRDIQQGLVPDDRSWIKLVTKP.

Arg-91 lines the pyridoxal 5'-phosphate pocket. Catalysis depends on Lys-195, which acts as the Proton acceptor. The residue at position 195 (Lys-195) is an N6-(pyridoxal phosphate)lysine. Glu-231 contacts pyridoxal 5'-phosphate.

It belongs to the class-IV pyridoxal-phosphate-dependent aminotransferase family. The cofactor is pyridoxal 5'-phosphate.

The enzyme catalyses L-isoleucine + 2-oxoglutarate = (S)-3-methyl-2-oxopentanoate + L-glutamate. It carries out the reaction L-leucine + 2-oxoglutarate = 4-methyl-2-oxopentanoate + L-glutamate. It catalyses the reaction L-valine + 2-oxoglutarate = 3-methyl-2-oxobutanoate + L-glutamate. Its pathway is mycotoxin biosynthesis. Functionally, branched-chain amino acid aminotransferase; part of the gene cluster that mediates the biosynthesis of pneumocandins, lipohexapeptides of the echinocandin family that prevent fungal cell wall formation by non-competitive inhibition of beta-1,3-glucan synthase. The 10,12-dimethylmyristoyl side chain is synthesized by the reducing polyketide synthase gloL/GLPKS4. The thioesterase gloN/GLHYD exclusively interacts with gloL/GLPKS4 to maintain turnover of the polyketide side chain. The 10R,12S-dimethylmyristic acid is then transferred to the first thiolation domain of the nonribosomal peptide synthetase gloA/GLNRPS4 by the acyl-AMP ligase gloD/GLligase, followed by its acylation to L-ornithine to trigger elongation of the cyclic hexapeptide. L-ornithine, 4R-hydroxyl-L-proline (generated from L-proline by the dioxygenase gloF/GLOXY2), 3S-hydroxyl-L-homotyrosine (generated by gloG/GLHtyB, gloH/GLHtyA, gloI/GLHtyC, gloJ/GLHtyD and hydroxylated at C-3 by the dioxygenase gloM/GLOXY1), 3R-hydroxyl-L-glutamine (generated from L-glutamine probably by the dioxygenase gloE/GLOXY3) and 3S-hydroxyl-L-proline (generated from L-proline by the dioxygenase gloF/GLOXY2 to yield pneumocandin B0), or 3S-hydroxyl-4S-methyl-L-proline (generated from L-leucine by the dioxygenase gloC/GLOXY4 to yield pneumocandin A0) are sequentially added to the growing chain. The last C domain of gloA/GLNRPS4 is proposed to be responsible for cyclization by condensation to form the peptide bond between L-ornithine and 3S-hydroxyl-4S-methyl-L-proline (for pneumocandin A0) or 3S-hydroxyl-L-proline (for pneumocandin B0). Finally, the subsequent C-4 hydroxylation of 3S-hydroxyl-L-homotyrosine and L-ornithine dihydroxylation at C-4 and C-5 are performed by the cytochrome P450 monooxygenases gloP/GLP450-1 and gloO/GLP450-2, respectively. The protein is Branched-chain amino acid aminotransferase gloG of Glarea lozoyensis (strain ATCC 20868 / MF5171).